We begin with the raw amino-acid sequence, 388 residues long: 4-hydroxy-3-methylbut-2-en-1-yl diphosphate synthase (flavodoxin) (388 aa).

Cysteine 281, cysteine 284, cysteine 316, and glutamate 323 together coordinate [4Fe-4S] cluster.

It belongs to the IspG family. Requires [4Fe-4S] cluster as cofactor.

It carries out the reaction (2E)-4-hydroxy-3-methylbut-2-enyl diphosphate + oxidized [flavodoxin] + H2O + 2 H(+) = 2-C-methyl-D-erythritol 2,4-cyclic diphosphate + reduced [flavodoxin]. It functions in the pathway isoprenoid biosynthesis; isopentenyl diphosphate biosynthesis via DXP pathway; isopentenyl diphosphate from 1-deoxy-D-xylulose 5-phosphate: step 5/6. Its function is as follows. Converts 2C-methyl-D-erythritol 2,4-cyclodiphosphate (ME-2,4cPP) into 1-hydroxy-2-methyl-2-(E)-butenyl 4-diphosphate. In Pseudarthrobacter chlorophenolicus (strain ATCC 700700 / DSM 12829 / CIP 107037 / JCM 12360 / KCTC 9906 / NCIMB 13794 / A6) (Arthrobacter chlorophenolicus), this protein is 4-hydroxy-3-methylbut-2-en-1-yl diphosphate synthase (flavodoxin).